The chain runs to 352 residues: tRNA pseudouridine synthase D (352 aa).

The active-site Nucleophile is D81. One can recognise a TRUD domain in the interval 157–303 (GVPNYFGGQR…MSHERRILRL (147 aa)).

It belongs to the pseudouridine synthase TruD family.

The catalysed reaction is uridine(13) in tRNA = pseudouridine(13) in tRNA. Its function is as follows. Responsible for synthesis of pseudouridine from uracil-13 in transfer RNAs. The protein is tRNA pseudouridine synthase D of Pseudomonas putida (strain W619).